We begin with the raw amino-acid sequence, 331 residues long: UPF0194 membrane protein YbhG (331 aa).

The signal sequence occupies residues 1-19 (MKKPVVIGLAIAAIVAVIA). A coiled-coil region spans residues 107–208 (EEIAQAAAAV…LDLQDTTLIA (102 aa)).

It belongs to the UPF0194 family.

It is found in the periplasm. In Salmonella gallinarum (strain 287/91 / NCTC 13346), this protein is UPF0194 membrane protein YbhG.